The sequence spans 30 residues: Proteinase inhibitor CeKI (30 aa).

It belongs to the protease inhibitor I3 (leguminous Kunitz-type inhibitor) family.

In terms of biological role, potent inhibitor of serine proteases plasma kallikrein, plasmin and coagulation factor XIIa. Weak inhibitor of serine proteases trypsin and coagulation factor Xa. Does not inhibit the serine proteases chymotrypsin, elastase or thrombin. Inhibits kinin release from HMW-kininogen by kallikrein in vitro. The chain is Proteinase inhibitor CeKI from Paubrasilia echinata (Pau Brasil).